The following is a 954-amino-acid chain: Glycine dehydrogenase (decarboxylating) (954 aa).

Position 704 is an N6-(pyridoxal phosphate)lysine (lysine 704).

It belongs to the GcvP family. The glycine cleavage system is composed of four proteins: P, T, L and H. Pyridoxal 5'-phosphate serves as cofactor.

The catalysed reaction is N(6)-[(R)-lipoyl]-L-lysyl-[glycine-cleavage complex H protein] + glycine + H(+) = N(6)-[(R)-S(8)-aminomethyldihydrolipoyl]-L-lysyl-[glycine-cleavage complex H protein] + CO2. The glycine cleavage system catalyzes the degradation of glycine. The P protein binds the alpha-amino group of glycine through its pyridoxal phosphate cofactor; CO(2) is released and the remaining methylamine moiety is then transferred to the lipoamide cofactor of the H protein. This Rhizobium meliloti (strain 1021) (Ensifer meliloti) protein is Glycine dehydrogenase (decarboxylating).